Consider the following 336-residue polypeptide: Ribosomal RNA large subunit methyltransferase F (336 aa).

Belongs to the methyltransferase superfamily. METTL16/RlmF family.

It localises to the cytoplasm. The enzyme catalyses adenosine(1618) in 23S rRNA + S-adenosyl-L-methionine = N(6)-methyladenosine(1618) in 23S rRNA + S-adenosyl-L-homocysteine + H(+). Functionally, specifically methylates the adenine in position 1618 of 23S rRNA. This Yersinia pestis bv. Antiqua (strain Angola) protein is Ribosomal RNA large subunit methyltransferase F.